The following is a 171-amino-acid chain: MTKKVAIILANEFEDIEYSSPKEALENAGFNTVVIGDTANSEVFGKHGEKVTVDVGIAEAKPEDYDALLIPGGFSPDHLRGDTEGRYGTFAKYFTKNDVPTFAICHGPQILIDTDDLKGRTLTAVLNVRKDLSNAGAHVVDESVVVDNNIVTSRVPDDLDDFNREIVKQLQ.

In terms of domain architecture, PfpI endopeptidase spans K3–Q171.

Belongs to the peptidase C56 family.

This is an uncharacterized protein from Staphylococcus aureus (strain MRSA252).